Here is a 245-residue protein sequence, read N- to C-terminus: 1-(5-phosphoribosyl)-5-[(5-phosphoribosylamino)methylideneamino] imidazole-4-carboxamide isomerase (245 aa).

D7 serves as the catalytic Proton acceptor. Catalysis depends on D129, which acts as the Proton donor.

The protein belongs to the HisA/HisF family.

Its subcellular location is the cytoplasm. It catalyses the reaction 1-(5-phospho-beta-D-ribosyl)-5-[(5-phospho-beta-D-ribosylamino)methylideneamino]imidazole-4-carboxamide = 5-[(5-phospho-1-deoxy-D-ribulos-1-ylimino)methylamino]-1-(5-phospho-beta-D-ribosyl)imidazole-4-carboxamide. It participates in amino-acid biosynthesis; L-histidine biosynthesis; L-histidine from 5-phospho-alpha-D-ribose 1-diphosphate: step 4/9. The polypeptide is 1-(5-phosphoribosyl)-5-[(5-phosphoribosylamino)methylideneamino] imidazole-4-carboxamide isomerase (Escherichia coli O7:K1 (strain IAI39 / ExPEC)).